Reading from the N-terminus, the 460-residue chain is UDP-N-acetylmuramate--L-alanine ligase (460 aa).

118–124 contributes to the ATP binding site; that stretch reads GTHGKTT.

This sequence belongs to the MurCDEF family.

It localises to the cytoplasm. It catalyses the reaction UDP-N-acetyl-alpha-D-muramate + L-alanine + ATP = UDP-N-acetyl-alpha-D-muramoyl-L-alanine + ADP + phosphate + H(+). Its pathway is cell wall biogenesis; peptidoglycan biosynthesis. Cell wall formation. The sequence is that of UDP-N-acetylmuramate--L-alanine ligase from Gloeobacter violaceus (strain ATCC 29082 / PCC 7421).